We begin with the raw amino-acid sequence, 714 residues long: Calpain-1 catalytic subunit (714 aa).

Positions 55 to 354 (LFRDEAFPPV…FTRLEICNLT (300 aa)) constitute a Calpain catalytic domain. Q109 and D114 together coordinate Ca(2+). Residues C115, H272, and N296 contribute to the active site. Positions 316, 318, and 323 each coordinate Ca(2+). T354 is modified (phosphothreonine). The interval 355–526 (PDALKSRTIR…KSAGTAELDD (172 aa)) is domain III. The segment at 527–542 (QIQANLPDEQVLSEEE) is linker. 4 consecutive EF-hand domains span residues 541-576 (EEID…IISK), 585-618 (FSLE…NRIR), 615-650 (NRIR…AGFK), and 680-714 (VRLE…TMFA). Positions 543–713 (IDENFKALFR…LFKWLQLTMF (171 aa)) are domain IV. Residues D598, D600, N602, K604, E609, D628, D630, S632, S634, and E639 each contribute to the Ca(2+) site.

Belongs to the peptidase C2 family. As to quaternary structure, forms a heterodimer with a small (regulatory) subunit CAPNS1. The cofactor is Ca(2+). Post-translationally, undergoes calcium-induced successive autoproteolytic cleavages that generate a membrane-bound 78 kDa active form and an intracellular 75 kDa active form. Calpastatin reduces with high efficiency the transition from 78 kDa to 75 kDa calpain forms.

It is found in the cytoplasm. The protein resides in the cell membrane. It catalyses the reaction Broad endopeptidase specificity.. With respect to regulation, activated by micromolar concentrations of calcium and inhibited by calpastatin. Functionally, calcium-regulated non-lysosomal thiol-protease which catalyzes limited proteolysis of substrates involved in cytoskeletal remodeling and signal transduction. Proteolytically cleaves CTBP1. Cleaves and activates caspase-7 (CASP7). The sequence is that of Calpain-1 catalytic subunit from Pongo abelii (Sumatran orangutan).